We begin with the raw amino-acid sequence, 455 residues long: MEFDTIAAISTPIGTGGIGIIRISGQNSIEVAGKIIKSKRFNSIYDIPVRYAALVEVYDNDEFIDQAILIKFKAPHSYTGEDVVEIQSHGGMVVLRRILEVVIKNGARHAMPGEFTKRAFLNGRLDLSQAEAIIDIINSKTELLQKNAAKQLKGVLSKKIDEIAEILLNLISSIEASIDFSEHEVDEISPQEIEKSIDTALEMIYRLLKTYETGRAIKSGIYTVIVGRPNVGKSSLLNRLLKEERSIVTDIPGTTRDVIEEVLDIEGIPIILVDTAGVRQTEDIVERIGVERTLKSVERADLVIFMIESDGITKEDIEIFSSIKNKKYIILVNKTDKGINISQDEIKKLFGKEGIFISIAKDENLELVEKAIKEAILEQNIEGFDEVLITNLRHKELLLKAKGFLTSAKQNLYSFPLDILSIDLKNALDSIYQITGKNVTEDMVDRIFSMFCIGK.

Residues R22, E85, and R124 each contribute to the (6S)-5-formyl-5,6,7,8-tetrahydrofolate site. One can recognise a TrmE-type G domain in the interval 220–377 (GIYTVIVGRP…VEKAIKEAIL (158 aa)). N230 is a binding site for K(+). GTP contacts are provided by residues 230 to 235 (NVGKSS), 249 to 255 (TDIPGTT), and 274 to 277 (DTAG). Position 234 (S234) interacts with Mg(2+). Residues T249, I251, and T254 each coordinate K(+). Position 255 (T255) interacts with Mg(2+). Residue K455 participates in (6S)-5-formyl-5,6,7,8-tetrahydrofolate binding.

It belongs to the TRAFAC class TrmE-Era-EngA-EngB-Septin-like GTPase superfamily. TrmE GTPase family. Homodimer. Heterotetramer of two MnmE and two MnmG subunits. Requires K(+) as cofactor.

It is found in the cytoplasm. Its function is as follows. Exhibits a very high intrinsic GTPase hydrolysis rate. Involved in the addition of a carboxymethylaminomethyl (cmnm) group at the wobble position (U34) of certain tRNAs, forming tRNA-cmnm(5)s(2)U34. The chain is tRNA modification GTPase MnmE from Caldicellulosiruptor saccharolyticus (strain ATCC 43494 / DSM 8903 / Tp8T 6331).